A 342-amino-acid polypeptide reads, in one-letter code: Predicted GPI-anchored protein 54 (342 aa).

Positions 1–16 are cleaved as a signal peptide; that stretch reads MRANYLLLLAATAVQA. Residues Asn-25, Asn-105, and Asn-151 are each glycosylated (N-linked (GlcNAc...) asparagine). Gly-314 is lipidated: GPI-anchor amidated glycine. A propeptide spans 315 to 342 (removed in mature form); the sequence is ASQSHPISSYSNYTISDYAPPISSYYSL. The N-linked (GlcNAc...) asparagine glycan is linked to Asn-326.

It localises to the cell membrane. The protein is Predicted GPI-anchored protein 54 (PGA54) of Candida albicans (strain SC5314 / ATCC MYA-2876) (Yeast).